The chain runs to 288 residues: Energy-coupling factor transporter ATP-binding protein EcfA2 (288 aa).

Residues 3–246 (IKLEQLGYCY…PDELVDLGLS (244 aa)) enclose the ABC transporter domain. An ATP-binding site is contributed by 40–47 (GHTGSGKS).

The protein belongs to the ABC transporter superfamily. Energy-coupling factor EcfA family. In terms of assembly, forms a stable energy-coupling factor (ECF) transporter complex composed of 2 membrane-embedded substrate-binding proteins (S component), 2 ATP-binding proteins (A component) and 2 transmembrane proteins (T component).

It localises to the cell membrane. Functionally, ATP-binding (A) component of a common energy-coupling factor (ECF) ABC-transporter complex. Unlike classic ABC transporters this ECF transporter provides the energy necessary to transport a number of different substrates. The protein is Energy-coupling factor transporter ATP-binding protein EcfA2 of Listeria monocytogenes serotype 4b (strain F2365).